A 459-amino-acid polypeptide reads, in one-letter code: Ribulose bisphosphate carboxylase large chain (459 aa).

The residue at position 4 (lysine 4) is an N6,N6,N6-trimethyllysine. The substrate site is built by asparagine 113 and threonine 163. Lysine 165 functions as the Proton acceptor in the catalytic mechanism. Residue lysine 167 participates in substrate binding. Mg(2+)-binding residues include lysine 191, aspartate 193, and glutamate 194. Lysine 191 carries the post-translational modification N6-carboxylysine. Histidine 284 acts as the Proton acceptor in catalysis. Residues arginine 285, histidine 317, and serine 369 each contribute to the substrate site.

It belongs to the RuBisCO large chain family. Type I subfamily. As to quaternary structure, heterohexadecamer of 8 large chains and 8 small chains; disulfide-linked. The disulfide link is formed within the large subunit homodimers. Mg(2+) serves as cofactor. Post-translationally, the disulfide bond which can form in the large chain dimeric partners within the hexadecamer appears to be associated with oxidative stress and protein turnover.

The protein resides in the plastid. The protein localises to the chloroplast. It carries out the reaction 2 (2R)-3-phosphoglycerate + 2 H(+) = D-ribulose 1,5-bisphosphate + CO2 + H2O. The catalysed reaction is D-ribulose 1,5-bisphosphate + O2 = 2-phosphoglycolate + (2R)-3-phosphoglycerate + 2 H(+). Its function is as follows. RuBisCO catalyzes two reactions: the carboxylation of D-ribulose 1,5-bisphosphate, the primary event in carbon dioxide fixation, as well as the oxidative fragmentation of the pentose substrate in the photorespiration process. Both reactions occur simultaneously and in competition at the same active site. The sequence is that of Ribulose bisphosphate carboxylase large chain from Geum quellyon (Chilean avens).